The primary structure comprises 775 residues: Zinc finger protein GLIS3 (775 aa).

Disordered regions lie at residues 121-147 (TESS…KKRA) and 282-314 (PGST…AHLH). The segment covering 123-133 (SSHSPYPSPRH) has biased composition (low complexity). The segment covering 134–147 (SSTRSHSARSKKRA) has biased composition (basic residues). Over residues 289 to 307 (PPAPPLPPLPPPPGPPPPY) the composition is skewed to pro residues. The C2H2-type 1 zinc-finger motif lies at 345 to 370 (HCCRWIDCSALYDQQEELVRHIEKVH). Residues 379–406 (FTCFWAGCPRRYKPFNARYKLLIHMRVH) form a C2H2-type 2; atypical zinc finger. 3 C2H2-type zinc fingers span residues 412–436 (NKCT…LRSH), 442–466 (YLCQ…QRTH), and 472–496 (YACQ…VKAH). Disordered stretches follow at residues 485 to 512 (DPSS…SSTE) and 529 to 665 (PATS…QPNG). A Bipartite nuclear localization signal motif is present at residues 491-507 (KHVKAHSSKEQQARKKL). Residues 497 to 512 (SSKEQQARKKLRSSTE) show a composition bias toward basic and acidic residues. 3 stretches are compositionally biased toward polar residues: residues 557–567 (IFSSNYSSRSG), 588–600 (VQGS…SQLP), and 632–663 (SILQ…SFQP).

Belongs to the GLI C2H2-type zinc-finger protein family. In the adult, expressed at high levels in the kidney and at lower levels in the brain, skeletal muscle, pancreas, liver, lung, thymus and ovary.

Its subcellular location is the nucleus. In terms of biological role, acts both as a repressor and an activator of transcription. Binds to the consensus sequence 5'-GACCACCCAC-3'. The polypeptide is Zinc finger protein GLIS3 (GLIS3) (Homo sapiens (Human)).